Consider the following 409-residue polypeptide: Chaetoglobosin A biosynthesis cluster protein C (409 aa).

Residues 51-120 (DLPANSRKLT…VKRQPQLRTR (70 aa)) form the HTH CENPB-type domain. Residues 84-113 (RGVEDMANHLLRERDAPPVGKLWAHNFVKR) constitute a DNA-binding region (H-T-H motif). Disordered stretches follow at residues 243 to 269 (PTHP…ETRS) and 320 to 350 (ANEP…QDPL). Positions 255–269 (PWASKTPYNAQETRS) are enriched in polar residues.

It localises to the nucleus. Part of the gene cluster that mediates the biosynthesis of chaetoglobosin A which has a unique inhibitory activity against actin polymerization in mammalian cells. Chaetoglobosin A and its intermediates are involved in the morphological differentiation of C.globosum. The first step of the pathway is the synthesis of prochaetoglobosin I via condensation of one acetyl-CoA, 8 malonyl-CoA, and a L-tryptophan molecule by the PKS-NRPS hybrid synthetase cheA, followed by reduction of backbone double bond to install desired geometry by the enoyl reductase cheB. Further multiple oxidation steps performed by the cytochrome P450 monooxygenases cheE and cheG, as well as by the FAD-linked oxidoreductase cheF, lead to the formation of chaetoglobosin A. Depending on the order of action of these reductases, distinct intermediates can be identified. Within the pathway, the cytochrome P450 monooxygenase cheE catalyzes a stereospecific epoxidation on prochaetoglobosin I, cytoglobosin D, and chaetoglobosin J intermediates. The FAD-linked oxidoreductase cheF performs dehydrogenation of the C-20 hydroxyl groups in the 20-dihyrochaetoglobosin A and cytoglobosin D intermediates. Finally, the cytochrome P450 monooxygenase cheG can catalyze the stereospecific dihydroxylation of prochaetoglobosin I and prochaetoglobosin IV at C-19 and C-20, respectively. The Diels-Alderase cheD may play a role in the post-PKS-NRPS biosynthetic steps catalyzing Diels-Alder cyclization. In Chaetomium globosum (strain ATCC 6205 / CBS 148.51 / DSM 1962 / NBRC 6347 / NRRL 1970) (Soil fungus), this protein is Chaetoglobosin A biosynthesis cluster protein C.